A 435-amino-acid chain; its full sequence is Putative F-box/kelch-repeat protein At1g13200 (435 aa).

Residues 1-29 (MKDAEKREVIASSSLQRKRNRGRRLRKRR) form a disordered region. A compositionally biased stretch (basic residues) spans 16-29 (QRKRNRGRRLRKRR). Positions 37–82 (LMVPSSLPNDVLEEIFLRFPVKALIRLKSLSKQWRSTIESRSFEER) constitute an F-box domain. 4 Kelch repeats span residues 164-217 (SVYV…DYKL), 224-270 (DKYI…PASA), 273-317 (SVYW…HIDM), and 322-368 (NSLC…EKRD).

The protein is Putative F-box/kelch-repeat protein At1g13200 of Arabidopsis thaliana (Mouse-ear cress).